The chain runs to 359 residues: Phosphate acyltransferase (359 aa).

A disordered region spans residues 338–359 (AGGVQSAPETEAPGAHPSPHVA).

Belongs to the PlsX family. In terms of assembly, homodimer. Probably interacts with PlsY.

Its subcellular location is the cytoplasm. The enzyme catalyses a fatty acyl-[ACP] + phosphate = an acyl phosphate + holo-[ACP]. The protein operates within lipid metabolism; phospholipid metabolism. In terms of biological role, catalyzes the reversible formation of acyl-phosphate (acyl-PO(4)) from acyl-[acyl-carrier-protein] (acyl-ACP). This enzyme utilizes acyl-ACP as fatty acyl donor, but not acyl-CoA. The chain is Phosphate acyltransferase from Cupriavidus taiwanensis (strain DSM 17343 / BCRC 17206 / CCUG 44338 / CIP 107171 / LMG 19424 / R1) (Ralstonia taiwanensis (strain LMG 19424)).